We begin with the raw amino-acid sequence, 198 residues long: QVLTARTLHGVMQNIRDIVNLKKSEFWNKGGPAWQKIVVCLVFDGIDPCDQNTLDLLATVGIYQDGVMKKDVDARTRLVHIFEYTTQLSVTPNQQLIDPNDNVTTSLPPVQMIFCLKQKNSKKINSHRWLFDGFGRILNPEVCILLDAGTKPGPKSLMSLWEAFYNDKDLGGACGEIHAMLGRGGVFGRKLLNPLVAA.

The protein belongs to the chitin synthase family. Class III subfamily.

It localises to the cell membrane. The enzyme catalyses [(1-&gt;4)-N-acetyl-beta-D-glucosaminyl](n) + UDP-N-acetyl-alpha-D-glucosamine = [(1-&gt;4)-N-acetyl-beta-D-glucosaminyl](n+1) + UDP + H(+). Functionally, polymerizes chitin, a structural polymer of the cell wall and septum, by transferring the sugar moiety of UDP-GlcNAc to the non-reducing end of the growing chitin polymer. This chain is Chitin synthase 2 (CHS2), found in Rhinocladiella atrovirens.